We begin with the raw amino-acid sequence, 681 residues long: PTS system glucose-specific EIICBA component (681 aa).

A PTS EIIC type-1 domain is found at 3–414 (KKLFGQLQRI…LKYKTPGRED (412 aa)). Helical transmembrane passes span 16–36 (LMLPVAILPAAGLLLAIGTAM), 73–93 (MIFALGVAIGLAGGDGVAAIA), 126–146 (ILGIPTLQTGVFGGIIIGALA), 170–190 (FVPIMMATTSFILAFPMALIW), 199–219 (AFSTGLLDSNTGVAVFLFGFI), 273–293 (FMQGEFPVMMFGLPAAALAIY), 303–323 (VVAGLMGSAALTSFLTGITEP), 328–348 (FLFVAPLLFFIHAVLDGLSFL), 355–375 (LHLGYTFSGGFIDYFLLGILP), and 383–403 (VIPVGLVYAVIYYFVFRFLIV). Residues 425-506 (TELPYAVLEA…QQIMNGQVVE (82 aa)) enclose the PTS EIIB type-1 domain. The active-site Phosphocysteine intermediate; for EIIB activity is the C447. The PTS EIIA type-1 domain maps to 551-655 (DQVFSEKMMG…SDITPIIVTQ (105 aa)). H603 functions as the Tele-phosphohistidine intermediate; for EIIA activity in the catalytic mechanism.

The protein resides in the cell membrane. The catalysed reaction is N(pros)-phospho-L-histidyl-[protein] + D-glucose(out) = D-glucose 6-phosphate(in) + L-histidyl-[protein]. Functionally, the phosphoenolpyruvate-dependent sugar phosphotransferase system (sugar PTS), a major carbohydrate active transport system, catalyzes the phosphorylation of incoming sugar substrates concomitantly with their translocation across the cell membrane. This system is involved in glucose transport. The sequence is that of PTS system glucose-specific EIICBA component (ptsG) from Staphylococcus aureus (strain NCTC 8325 / PS 47).